The sequence spans 485 residues: NADH-quinone oxidoreductase subunit N (485 aa).

The next 14 helical transmembrane spans lie at 10–30 (AMLP…SIAW), 35–55 (FINA…LYFV), 75–95 (FYIG…YPWL), 104–124 (EFYL…SANH), 125–145 (LASL…LIGY), 159–179 (YMLL…LLYA), 203–223 (ILAG…LVPF), 235–255 (PAPV…AVVM), 271–291 (LVLS…AISQ), 297–317 (LLGY…VAVQ), 327–347 (GVYL…VSLM), 374–394 (AVMT…GFIG), 408–427 (WWLT…YYLR), and 449–469 (ALTA…VLGI).

It belongs to the complex I subunit 2 family. NDH-1 is composed of 13 different subunits. Subunits NuoA, H, J, K, L, M, N constitute the membrane sector of the complex.

It localises to the cell inner membrane. It carries out the reaction a quinone + NADH + 5 H(+)(in) = a quinol + NAD(+) + 4 H(+)(out). Its function is as follows. NDH-1 shuttles electrons from NADH, via FMN and iron-sulfur (Fe-S) centers, to quinones in the respiratory chain. The immediate electron acceptor for the enzyme in this species is believed to be ubiquinone. Couples the redox reaction to proton translocation (for every two electrons transferred, four hydrogen ions are translocated across the cytoplasmic membrane), and thus conserves the redox energy in a proton gradient. This Yersinia enterocolitica serotype O:8 / biotype 1B (strain NCTC 13174 / 8081) protein is NADH-quinone oxidoreductase subunit N.